A 281-amino-acid chain; its full sequence is NH(3)-dependent NAD(+) synthetase (281 aa).

Position 24–31 (24–31 (GVSGGVDS)) interacts with ATP. Asp-30 lines the Mg(2+) pocket. A deamido-NAD(+)-binding site is contributed by Arg-145. Thr-165 provides a ligand contact to ATP. Glu-170 is a binding site for Mg(2+). The deamido-NAD(+) site is built by Lys-178 and Asp-185. The ATP site is built by Lys-194 and Ser-216.

The protein belongs to the NAD synthetase family. As to quaternary structure, homodimer.

It carries out the reaction deamido-NAD(+) + NH4(+) + ATP = AMP + diphosphate + NAD(+) + H(+). It participates in cofactor biosynthesis; NAD(+) biosynthesis; NAD(+) from deamido-NAD(+) (ammonia route): step 1/1. In terms of biological role, catalyzes the ATP-dependent amidation of deamido-NAD to form NAD. Uses ammonia as a nitrogen source. The protein is NH(3)-dependent NAD(+) synthetase (nadE1) of Thermotoga maritima (strain ATCC 43589 / DSM 3109 / JCM 10099 / NBRC 100826 / MSB8).